The chain runs to 257 residues: AN1-type zinc finger protein 2B (257 aa).

2 AN1-type zinc fingers span residues 4 to 52 and 94 to 142; these read PDLG…QKDI and KIFT…HPTS. Zn(2+) contacts are provided by Cys-10, Cys-15, Cys-25, Cys-28, Cys-33, His-36, His-42, Cys-44, Cys-100, Cys-105, Cys-115, Cys-118, Cys-123, His-126, His-132, and Cys-134. Residues 141–151 form a VCP/p97-interacting motif (VIM) region; the sequence is TSRAGLAAISR. The segment at 153–187 is disordered; it reads QGLASTSTVPSPSRTLPSSSSPSRATPQLPPRTTS. The segment covering 156-179 has biased composition (low complexity); that stretch reads ASTSTVPSPSRTLPSSSSPSRATP. 3 positions are modified to phosphoserine: Ser-163, Ser-173, and Ser-187. 2 consecutive UIM domains span residues 197–216 and 221–240; these read SEDE…AKPQ and QEEE…AEYQ. Cys-254 bears the Cysteine methyl ester mark. Cys-254 carries the S-geranylgeranyl cysteine lipid modification. Positions 254 to 257 match the CAAX motif motif; it reads CSLC. A propeptide spans 255-257 (removed in mature form); sequence SLC.

As to quaternary structure, binds 'Lys-48'-linked polyubiquitin chains of ubiquitinated proteins. Associates with the proteasome complex; upon exposure to arsenite. Interacts (via VIM motif) with VCP; the interaction is direct. Interacts with BAG6. Interacts with IGF1R (nascent precursor form). Interacts with DERL1, FAF2, NPLOC4 and UFD1; probably through VCP. Post-translationally, phosphorylated by MAPK14. Phosphorylation has no effect on association with the proteasome complex.

The protein resides in the endoplasmic reticulum membrane. Its function is as follows. Plays a role in protein homeostasis by regulating both the translocation and the ubiquitin-mediated proteasomal degradation of nascent proteins at the endoplasmic reticulum. It is involved in the regulation of signal-mediated translocation of proteins into the endoplasmic reticulum. It also plays a role in the ubiquitin-mediated proteasomal degradation of proteins for which signal-mediated translocation to the endoplasmic reticulum has failed. May therefore function in the endoplasmic reticulum stress-induced pre-emptive quality control, a mechanism that selectively attenuates the translocation of newly synthesized proteins into the endoplasmic reticulum and reroutes them to the cytosol for proteasomal degradation. By controlling the steady-state expression of the IGF1R receptor, indirectly regulates the insulin-like growth factor receptor signaling pathway. This is AN1-type zinc finger protein 2B from Rattus norvegicus (Rat).